A 354-amino-acid chain; its full sequence is ATPase GET3 (354 aa).

Position 26-33 (26-33) interacts with ATP; that stretch reads KGGVGKTT. Residue aspartate 57 is part of the active site. ATP is bound by residues glutamate 245 and asparagine 272. Positions 285 and 288 each coordinate Zn(2+).

This sequence belongs to the arsA ATPase family. In terms of assembly, homodimer. Component of the Golgi to ER traffic (GET) complex, which is composed of GET1, GET2 and GET3. Within the complex, GET1 and GET2 form a heterotetramer which is stabilized by phosphatidylinositol binding and which binds to the GET3 homodimer. Interacts with the chloride channel protein GEF1.

It localises to the cytoplasm. It is found in the endoplasmic reticulum. The protein resides in the golgi apparatus. ATPase required for the post-translational delivery of tail-anchored (TA) proteins to the endoplasmic reticulum. Recognizes and selectively binds the transmembrane domain of TA proteins in the cytosol. This complex then targets to the endoplasmic reticulum by membrane-bound receptors GET1 and GET2, where the tail-anchored protein is released for insertion. This process is regulated by ATP binding and hydrolysis. ATP binding drives the homodimer towards the closed dimer state, facilitating recognition of newly synthesized TA membrane proteins. ATP hydrolysis is required for insertion. Subsequently, the homodimer reverts towards the open dimer state, lowering its affinity for the GET1-GET2 receptor, and returning it to the cytosol to initiate a new round of targeting. Cooperates with the HDEL receptor ERD2 to mediate the ATP-dependent retrieval of resident ER proteins that contain a C-terminal H-D-E-L retention signal from the Golgi to the ER. Involved in low-level resistance to the oxyanions arsenite and arsenate, and in heat tolerance. This is ATPase GET3 from Saccharomyces cerevisiae (strain RM11-1a) (Baker's yeast).